Consider the following 427-residue polypeptide: ATP-dependent RNA helicase DDX39A (427 aa).

The segment covering 1-19 (MAEQDVENDLLDYDEEEEP) has biased composition (acidic residues). Positions 1 to 34 (MAEQDVENDLLDYDEEEEPQAPQESTPAPPKKDI) are disordered. A2 bears the N-acetylalanine mark. K31 is covalently cross-linked (Glycyl lysine isopeptide (Lys-Gly) (interchain with G-Cter in SUMO2)). K35 carries the N6-acetyllysine; alternate modification. K35 participates in a covalent cross-link: Glycyl lysine isopeptide (Lys-Gly) (interchain with G-Cter in SUMO2); alternate. S37 bears the Phosphoserine mark. The Q motif motif lies at 44 to 72 (SGFRDFLLKPELLRAIVDCGFEHPSEVQH). The region spanning 75–248 (IPQAILGMDV…RKFMQDPMEV (174 aa)) is the Helicase ATP-binding domain. An ATP-binding site is contributed by 88–95 (AKSGMGKT). Glycyl lysine isopeptide (Lys-Gly) (interchain with G-Cter in SUMO2) cross-links involve residues K154 and K162. T171 is modified (phosphothreonine). Positions 195 to 198 (DECD) match the DECD box motif. Glycyl lysine isopeptide (Lys-Gly) (interchain with G-Cter in SUMO2) cross-links involve residues K240 and K255. The Helicase C-terminal domain occupies 260–421 (GLQQYYVKLK…ELPEEIDIST (162 aa)). S426 is modified (phosphoserine).

This sequence belongs to the DEAD box helicase family. DECD subfamily. In terms of assembly, binds ALYREF/THOC4 and DDX39B/BAT1. Interacts with the apo-AREX complex component SARNP. Interacts with MX1. Interacts with MCM3AP isoform GANP. Interacts with ECD. Interacts with PHAX; this interaction stimulates PHAX RNA binding activity. (Microbial infection) Interacts with human cytomegalovirus/HHV-5 protein UL69. In terms of processing, SUMOylated by RANBP2; SUMOylation modification affects its ability to bind RNA. In terms of tissue distribution, detected in testis, and at lower levels in brain, kidney, lung, thymus, spleen and salivary gland.

It is found in the nucleus. Its subcellular location is the cytoplasm. The catalysed reaction is ATP + H2O = ADP + phosphate + H(+). Helicase that plays an essential role in mRNA export and is involved in multiple steps in RNA metabolism including alternative splicing. Regulates nuclear mRNA export to the cytoplasm through association with ECD. Also involved in spliceosomal uridine-rich small nuclear RNA (U snRNA) export by stimulating the RNA binding of adapter PHAX. Plays a role in the negative regulation of type I IFN production by increasing the nuclear retention of antiviral transcripts and thus reducing their protein expression. Independently of the interferon pathway, plays an antiviral role against alphaviruses by binding to a 5' conserved sequence element in the viral genomic RNA. The sequence is that of ATP-dependent RNA helicase DDX39A (DDX39A) from Homo sapiens (Human).